A 682-amino-acid chain; its full sequence is Potassium-transporting ATPase ATP-binding subunit (682 aa).

4 helical membrane-spanning segments follow: residues 34-54, 62-82, 219-239, and 254-274; these read PVMF…IAMA, ALFS…ANFA, IALT…TATL, and VLVA…LSAI. Asp307 functions as the 4-aspartylphosphate intermediate in the catalytic mechanism. ATP-binding positions include Asp344, Glu348, 377–384, and Lys395; that span reads FTAQSRMS. The Mg(2+) site is built by Asp518 and Asp522. Transmembrane regions (helical) follow at residues 588–608, 616–636, and 656–676; these read FAII…LNIM, AILS…PLAL, and IYGL…DLLL.

Belongs to the cation transport ATPase (P-type) (TC 3.A.3) family. Type IA subfamily. As to quaternary structure, the system is composed of three essential subunits: KdpA, KdpB and KdpC.

The protein localises to the cell inner membrane. It catalyses the reaction K(+)(out) + ATP + H2O = K(+)(in) + ADP + phosphate + H(+). Part of the high-affinity ATP-driven potassium transport (or Kdp) system, which catalyzes the hydrolysis of ATP coupled with the electrogenic transport of potassium into the cytoplasm. This subunit is responsible for energy coupling to the transport system and for the release of the potassium ions to the cytoplasm. The polypeptide is Potassium-transporting ATPase ATP-binding subunit (Escherichia coli (strain SMS-3-5 / SECEC)).